A 263-amino-acid chain; its full sequence is tRNA pseudouridine synthase A (263 aa).

The active-site Nucleophile is the Asp-53. Position 111 (Tyr-111) interacts with substrate. Positions 232–263 (TAPGHGLISGRSNMTNGKLENNKTTNPCVTKY) are disordered. Residues 241–263 (GRSNMTNGKLENNKTTNPCVTKY) show a composition bias toward polar residues.

Belongs to the tRNA pseudouridine synthase TruA family. As to quaternary structure, homodimer.

It catalyses the reaction uridine(38/39/40) in tRNA = pseudouridine(38/39/40) in tRNA. In terms of biological role, formation of pseudouridine at positions 38, 39 and 40 in the anticodon stem and loop of transfer RNAs. In Halalkalibacterium halodurans (strain ATCC BAA-125 / DSM 18197 / FERM 7344 / JCM 9153 / C-125) (Bacillus halodurans), this protein is tRNA pseudouridine synthase A.